The following is a 1506-amino-acid chain: DDB1- and CUL4-associated factor 1 (1506 aa).

Positions 141-499 (QPLRTYSTGL…STLEILNLED (359 aa)) are protein kinase-like. Phosphoserine is present on residues Ser-202 and Ser-254. The tract at residues 241 to 275 (RLDSSHKTSSRVNSATKPEEGGLKKNKSAKHGDRE) is disordered. A Chromo domain is found at 561 to 592 (SYTHEQIVEMMEFLIEYGPAQLYWEPAEVFLK). Lys-700 is subject to N6-acetyllysine. Ser-827 bears the Phosphoserine mark. The LisH domain occupies 845–877 (PEKELLLLIRNHLISKGLGETATVLTREADLPM). Thr-887 bears the Phosphothreonine mark. Phosphoserine is present on residues Ser-894 and Ser-897. Disordered stretches follow at residues 916–946 (ATVG…GPSY) and 977–999 (KSDH…HLPS). Pro residues predominate over residues 924–943 (SAPPAHPPPRPPQGSLPLPG). Residues Ser-978 and Ser-999 each carry the phosphoserine modification. WD repeat units lie at residues 1090-1129 (EDES…EEAS), 1132-1173 (CHNS…DMKH), 1175-1212 (FTED…KLLT), 1214-1246 (FNPD…WDVR), and 1247-1289 (SAQA…LLHT). Positions 1090–1289 (EDESGFTCCA…DLRTFHLLHT (200 aa)) are WD repeat-like region. 2 short sequence motifs (DWD box) span residues 1241–1248 (VLWDVRSA) and 1277–1284 (EIWDLRTF). Ser-1327 carries the post-translational modification Phosphoserine. The tract at residues 1392–1506 (RLAEDEDEEE…EDDIILSLNE (115 aa)) is disordered. 2 stretches are compositionally biased toward acidic residues: residues 1395–1482 (EDED…EEVE) and 1489–1500 (DSSDNSDLEDDI). The segment at 1417–1506 (DDDTDDLDEL…EDDIILSLNE (90 aa)) is interaction with NF2.

It belongs to the VPRBP/DCAF1 family. As to quaternary structure, component of the DCX (DDB1-CUL4-X-box) E3 ubiquitin-protein ligase complex, named CUL4A-RBX1-DDB1-DCAF1/VPRBP complex. Interacts with DDB1; the interaction is direct. Also forms a ternary complex with DDA1 and DDB1. Interacts with NF2 (via FERM domain). Component of the EDVP complex, a E3 ligase complex containing DYRK2, EDD/UBR5, DDB1 and DCAF1. Interacts with DYRK2; the interaction is direct. Interacts with RAG1; the interaction is direct. Interacts with LLGL1 and LLGL2. Interacts with histone H3. Interacts with ESR1 and LATS1; probably recruited by LATS1 to promote ESR1 ubiquitination and ubiquitin-mediated proteasomal degradation. Directly interacts with TET1, TET2 and TET3 (via C-terminus). Interacts with CEP78; promoting DCAF1 localization to centrosomes. As to expression, widely expressed. Expressed in oocytes and zygotes (at protein level).

It localises to the cytoplasm. It is found in the nucleus. The protein localises to the cytoskeleton. The protein resides in the microtubule organizing center. Its subcellular location is the centrosome. The catalysed reaction is L-seryl-[protein] + ATP = O-phospho-L-seryl-[protein] + ADP + H(+). The enzyme catalyses L-threonyl-[protein] + ATP = O-phospho-L-threonyl-[protein] + ADP + H(+). It functions in the pathway protein modification; protein ubiquitination. Its function is as follows. Acts both as a substrate recognition component of E3 ubiquitin-protein ligase complexes and as an atypical serine/threonine-protein kinase, playing key roles in various processes such as cell cycle, telomerase regulation and histone modification. Probable substrate-specific adapter of a DCX (DDB1-CUL4-X-box) E3 ubiquitin-protein ligase complex, named CUL4A-RBX1-DDB1-DCAF1/VPRBP complex, which mediates ubiquitination and proteasome-dependent degradation of proteins such as NF2. Involved in the turnover of methylated proteins: recognizes and binds methylated proteins via its chromo domain, leading to ubiquitination of target proteins by the RBX1-DDB1-DCAF1/VPRBP complex. The CUL4A-RBX1-DDB1-DCAF1/VPRBP complex is also involved in B-cell development: DCAF1 is recruited by RAG1 to ubiquitinate proteins, leading to limit error-prone repair during V(D)J recombination. Also part of the EDVP complex, an E3 ligase complex that mediates ubiquitination of proteins such as TERT, leading to TERT degradation and telomerase inhibition. The EDVP complex also mediates ubiquitination and degradation of CCP110. Also acts as an atypical serine/threonine-protein kinase that specifically mediates phosphorylation of 'Thr-120' of histone H2A (H2AT120ph) in a nucleosomal context, thereby repressing transcription. H2AT120ph is present in the regulatory region of many tumor suppresor genes, down-regulates their transcription and is present at high level in a number of tumors. Involved in JNK-mediated apoptosis during cell competition process via its interaction with LLGL1 and LLGL2. By acting on TET dioxygenses, essential for oocyte maintenance at the primordial follicle stage, hence essential for female fertility. The protein is DDB1- and CUL4-associated factor 1 of Mus musculus (Mouse).